Reading from the N-terminus, the 219-residue chain is Protoglabretal synthase ISM2 (219 aa).

5 helical membrane passes run 26–46 (VHAW…VLAG), 59–79 (LMIW…YWLF), 112–132 (AVVG…LFAV), 144–164 (ILQL…FITA), and 178–198 (YYKY…LIII). Residues 55-197 (TDKWLMIWWA…TWLLFPALII (143 aa)) form the EXPERA domain.

Belongs to the EBP family.

It is found in the membrane. It catalyses the reaction 7,8-epoxymelianol = protoglabretal. It functions in the pathway secondary metabolite biosynthesis; terpenoid biosynthesis. Its function is as follows. Isomerase involved in the biosynthesis of glabretanes triterpene natural products such as glabretal, a component with in vitro antiproliferative properties on lymphocytes. Catalyzes the conversion of 7,8-epoxymelianol to protoglabretal via skeletal rearrangements. This Ailanthus altissima (Tree-of-heaven) protein is Protoglabretal synthase ISM2.